The chain runs to 384 residues: Methylthioribose-1-phosphate isomerase (384 aa).

Catalysis depends on aspartate 255, which acts as the Proton donor.

This sequence belongs to the eIF-2B alpha/beta/delta subunits family. MtnA subfamily.

The protein localises to the cytoplasm. The protein resides in the nucleus. The catalysed reaction is 5-(methylsulfanyl)-alpha-D-ribose 1-phosphate = 5-(methylsulfanyl)-D-ribulose 1-phosphate. The protein operates within amino-acid biosynthesis; L-methionine biosynthesis via salvage pathway; L-methionine from S-methyl-5-thio-alpha-D-ribose 1-phosphate: step 1/6. Its function is as follows. Catalyzes the interconversion of methylthioribose-1-phosphate (MTR-1-P) into methylthioribulose-1-phosphate (MTRu-1-P). The polypeptide is Methylthioribose-1-phosphate isomerase (mri1) (Talaromyces marneffei (strain ATCC 18224 / CBS 334.59 / QM 7333) (Penicillium marneffei)).